A 340-amino-acid chain; its full sequence is Coproporphyrin III ferrochelatase (340 aa).

Positions 52 and 116 each coordinate Fe-coproporphyrin III. Residues His-172 and Glu-255 each contribute to the Fe(2+) site.

It belongs to the ferrochelatase family.

It is found in the cytoplasm. The catalysed reaction is Fe-coproporphyrin III + 2 H(+) = coproporphyrin III + Fe(2+). It participates in porphyrin-containing compound metabolism; protoheme biosynthesis. Involved in coproporphyrin-dependent heme b biosynthesis. Catalyzes the insertion of ferrous iron into coproporphyrin III to form Fe-coproporphyrin III. This is Coproporphyrin III ferrochelatase from Mycobacterium ulcerans (strain Agy99).